A 98-amino-acid chain; its full sequence is MLSRLQELRKEEETLLRLKAALHDQLNRLKVEELALQSMISSRRGDEMLSSHTVPEQSHDMLVHVDNEASINQTTLELSTKSHVTEEEEEEEEEESDS.

Residues 73-82 are compositionally biased toward polar residues; it reads QTTLELSTKS. A disordered region spans residues 73–98; sequence QTTLELSTKSHVTEEEEEEEEEESDS. Thr-85 carries the phosphothreonine modification. A compositionally biased stretch (acidic residues) spans 86-98; the sequence is EEEEEEEEEESDS.

As to quaternary structure, part of the SNAPc complex composed of 5 subunits: SNAPC1, SNAPC2, SNAPC3, SNAPC4 and SNAPC5. SNAPC5 interacts with SNAPC4.

The protein resides in the nucleus. Its function is as follows. Part of the SNAPc complex required for the transcription of both RNA polymerase II and III small-nuclear RNA genes. Binds to the proximal sequence element (PSE), a non-TATA-box basal promoter element common to these 2 types of genes. Recruits TBP and BRF2 to the U6 snRNA TATA box. This chain is snRNA-activating protein complex subunit 5 (SNAPC5), found in Homo sapiens (Human).